We begin with the raw amino-acid sequence, 366 residues long: Ribosome-binding ATPase YchF (366 aa).

In terms of domain architecture, OBG-type G spans 3-259; sequence LTAGIVGLPN…LEGEEKQMFL (257 aa). 12–17 provides a ligand contact to ATP; sequence NVGKST. Mg(2+) is bound by residues S16 and T36. Residues 281-364 form the TGS domain; the sequence is GLATYFTAGE…QDGDVIHFRF (84 aa).

The protein belongs to the TRAFAC class OBG-HflX-like GTPase superfamily. OBG GTPase family. YchF/OLA1 subfamily. The cofactor is Mg(2+).

Its function is as follows. ATPase that binds to both the 70S ribosome and the 50S ribosomal subunit in a nucleotide-independent manner. In Bacillus subtilis (strain 168), this protein is Ribosome-binding ATPase YchF.